The following is a 399-amino-acid chain: Mannan endo-1,4-beta-mannosidase 4 (399 aa).

Residues 1–26 form the signal peptide; that stretch reads MNNSIILIFVAILIIFPNEFSKPTRA. Residues W88 and N203 each coordinate substrate. E204 (proton donor) is an active-site residue. Y279 contributes to the substrate binding site. The active-site Nucleophile is the E318. Residues C347 and C354 are joined by a disulfide bond. Residue W360 participates in substrate binding.

The protein belongs to the glycosyl hydrolase 5 (cellulase A) family. As to expression, expressed in flowers and fruit pericarp.

It is found in the secreted. It catalyses the reaction Random hydrolysis of (1-&gt;4)-beta-D-mannosidic linkages in mannans, galactomannans and glucomannans.. Possesses endo-beta-mannanase and mannan transglycosylase activities. May be involved in cell wall degradation during fruit ripening. This Solanum lycopersicum (Tomato) protein is Mannan endo-1,4-beta-mannosidase 4 (MAN4).